We begin with the raw amino-acid sequence, 307 residues long: NAD kinase 1 (307 aa).

The active-site Proton acceptor is the D67. NAD(+)-binding positions include 67–68 (DG), 149–150 (NE), R160, D181, and 192–197 (TCYTSS).

This sequence belongs to the NAD kinase family. A divalent metal cation serves as cofactor.

Its subcellular location is the cytoplasm. It catalyses the reaction NAD(+) + ATP = ADP + NADP(+) + H(+). Involved in the regulation of the intracellular balance of NAD and NADP, and is a key enzyme in the biosynthesis of NADP. Catalyzes specifically the phosphorylation on 2'-hydroxyl of the adenosine moiety of NAD to yield NADP. Essential for photoheterotrophic growth. Has a significant function in the oxidative pentose phosphate (OPP) pathway for glucose catabolism under photoheterotrophic conditions. Is also involved in cellular redox homeostasis. The polypeptide is NAD kinase 1 (Synechocystis sp. (strain ATCC 27184 / PCC 6803 / Kazusa)).